The sequence spans 1014 residues: Poly [ADP-ribose] polymerase 1 (1014 aa).

At A2 the chain carries N-acetylalanine. Residues 9-93 form a PARP-type 1 zinc finger; the sequence is YRVEYAKSGR…KVKKTAEAGG (85 aa). Residues C21 and C24 each contribute to the Zn(2+) site. The residue at position 41 (S41) is a Phosphoserine. The Zn(2+) site is built by H53 and C56. N6-acetyllysine occurs at positions 97 and 105. The PARP-type 2 zinc finger occupies 113 to 203; that stretch reads FAAEYAKSNR…ALKKQLPGVK (91 aa). Zn(2+)-binding residues include C125 and C128. At K131 the chain carries N6-acetyllysine. 2 residues coordinate Zn(2+): H159 and C162. S177, S179, and S185 each carry phosphoserine. A Glycyl lysine isopeptide (Lys-Gly) (interchain with G-Cter in SUMO2) cross-link involves residue K192. Residues 198-233 form a disordered region; that stretch reads QLPGVKSEGKRKGDEVDGVDEVAKKKSKKEKDKDSK. A Glycyl lysine isopeptide (Lys-Gly) (interchain with G-Cter in SUMO1); alternate cross-link involves residue K203. K203 participates in a covalent cross-link: Glycyl lysine isopeptide (Lys-Gly) (interchain with G-Cter in SUMO2); alternate. Basic and acidic residues predominate over residues 204–233; it reads SEGKRKGDEVDGVDEVAKKKSKKEKDKDSK. Short sequence motifs (nuclear localization signal) lie at residues 207 to 209 and 221 to 226; these read KRK and KKKSKK. Residues 225 to 359 enclose the PADR1 zinc-binding domain; that stretch reads KKEKDKDSKL…VKKQDRIFPP (135 aa). A Glycyl lysine isopeptide (Lys-Gly) (interchain with G-Cter in SUMO2) cross-link involves residue K249. 2 positions are modified to phosphoserine: S274 and S277. The interval 290 to 332 is zinc ribbon; the sequence is GALLPCEECSGQLVFKSDAYYCTGDVTAWTKCMVKTQTPNRKE. Zn(2+) is bound by residues C295, C298, C311, and C321. A disordered region spans residues 361 to 385; it reads TSASVAATPPPSTASAPAAVNSSAS. At S364 the chain carries Phosphoserine. T368 bears the Phosphothreonine mark. The segment at 373 to 524 is automodification domain; the sequence is TASAPAAVNS…GINKSEKRMK (152 aa). Residues 385–476 enclose the BRCT domain; sequence SADKPLSNMK…KSLQELFLAH (92 aa). Position 387 is a polyADP-ribosyl aspartic acid (D387). E407, E413, E435, E437, E444, E445, E448, and E456 each carry polyADP-ribosyl glutamic acid. K467 is covalently cross-linked (Glycyl lysine isopeptide (Lys-Gly) (interchain with G-Cter in SUMO2)). Residues E471 and E484 each carry the polyADP-ribosyl glutamic acid modification. A Glycyl lysine isopeptide (Lys-Gly) (interchain with G-Cter in SUMO1); alternate cross-link involves residue K486. K486 participates in a covalent cross-link: Glycyl lysine isopeptide (Lys-Gly) (interchain with G-Cter in SUMO2); alternate. 2 positions are modified to polyADP-ribosyl glutamic acid: E488 and E491. Residues S499, S504, and S507 each carry the ADP-ribosylserine modification. K512 participates in a covalent cross-link: Glycyl lysine isopeptide (Lys-Gly) (interchain with G-Cter in SUMO2). 2 positions are modified to polyADP-ribosyl glutamic acid: E513 and E514. Residue S519 is modified to ADP-ribosylserine. A PolyADP-ribosyl glutamic acid modification is found at E520. An N6-(ADP-ribosyl)lysine modification is found at K521. A Glycyl lysine isopeptide (Lys-Gly) (interchain with G-Cter in SUMO2) cross-link involves residue K528. Residues 542–638 enclose the WGR domain; sequence SAHVLEKGGK…KNFTKYPKKF (97 aa). At T594 the chain carries Phosphothreonine; by PRKDC. N6-acetyllysine occurs at positions 600 and 621. In terms of domain architecture, PARP alpha-helical spans 662 to 779; sequence KSKLPKPVQD…DIEVAYSLLR (118 aa). K748 is covalently cross-linked (Glycyl lysine isopeptide (Lys-Gly) (interchain with G-Cter in SUMO1); alternate). K748 participates in a covalent cross-link: Glycyl lysine isopeptide (Lys-Gly) (interchain with G-Cter in SUMO2); alternate. S782 and S786 each carry phosphoserine. Residues 788 to 1014 form the PARP catalytic domain; the sequence is DPIDVNYEKL…LKFNFKTSLW (227 aa). NAD(+)-binding positions include 862-864, G871, R878, and S904; that span reads HGS. E988 functions as the For poly [ADP-ribose] polymerase activity in the catalytic mechanism.

It belongs to the ARTD/PARP family. As to quaternary structure, homodimer; PARP-type zinc-fingers from separate PARP1 molecules form a dimer module that specifically recognizes DNA strand breaks. Heterodimer; heterodimerizes with PARP2. Interacts (via the PARP catalytic domain) with HPF1. Interacts with NMNAT1. Interacts with nucleosomes; with a preference for nucleosomes containing H2A.X. Interacts with APTX. Component of a base excision repair (BER) complex, containing at least XRCC1, PARP1, PARP2, POLB and LRIG3. Interacts with SRY. The SWAP complex consists of NPM1, NCL, PARP1 and SWAP70. Interacts with TIAM2. Interacts with PARP3; leading to activate PARP1 in absence of DNA. Interacts (when poly-ADP-ribosylated) with CHD1L (via macro domain). Interacts with the DNA polymerase alpha catalytic subunit POLA1; this interaction functions as part of the control of replication fork progression. Interacts with EEF1A1 and TXK. Interacts with RNF4. Interacts with RNF146. Interacts with ZNF423. Interacts with APLF. Interacts with SNAI1 (via zinc fingers); the interaction requires SNAI1 to be poly-ADP-ribosylated and non-phosphorylated (active) by GSK3B. Interacts (when poly-ADP-ribosylated) with PARP9. Interacts with NR4A3; activates PARP1 by improving acetylation of PARP1 and suppressing the interaction between PARP1 and SIRT1. Interacts (via catalytic domain) with PUM3; the interaction inhibits the poly-ADP-ribosylation activity of PARP1 and the degradation of PARP1 by CASP3 following genotoxic stress. Interacts with ZNF365. Interacts with RRP1B. Interacts with TIMELESS; the interaction is direct. Interacts with CGAS; leading to impede the formation of the PARP1-TIMELESS complex. Interacts with KHDC3L, the interaction is increased following the formation of DNA double-strand breaks. Interacts (when auto-poly-ADP-ribosylated) with XRCC1; leading to inhibit PARP1 ADP-ribosyltransferase activity. Interacts with SPINDOC; promoting PARP1 ADP-ribosyltransferase activity. Interacts with BANF1; leading to inhibit PARP1 ADP-ribosyltransferase activity in response to oxidative DNA damage. Interacts (when sumoylated and ubiquitinated) with VCP/p97; leading to its extraction from chromatin. Interacts with YARS1; Interacts with PACMP micropeptide; interaction. Interacts with PACMP micropeptide; Interacts with PACMP micropeptide; interaction. Interacts (when poly-ADP-ribosylated) with isoform 1 of MACROH2A1; MACROH2A1 specifically binds to poly-ADP-ribose chains and inhibits PARP1 activity, limiting the consumption of nuclear NAD(+). Interacts with CARM1; promoting recruitment to replication forks. Interacts with RECQL. Interacts with ZNF32; the interaction reshapes ZNF432 interacting proteins. Interacts with TPRN; TPRN interacts with a number of DNA damage response proteins, is recruited to sites of DNA damage and may play a role in DNA damage repair. Interacts (when auto-poly-ADP-ribosylated) with AIFM1. In terms of assembly, (Microbial infection) Interacts with human herpesvirus 8 (KSHV) protein RTA/ORF50; this interaction negatively regulates RTA/ORF50 transactivation activity. Post-translationally, poly-ADP-ribosylated on serine, glutamate and aspartate residues by autocatalysis. Auto-ADP-ribosylation on serine takes place following interaction with HPF1. Auto poly-ADP-ribosylation on serine residues promotes its dissociation from chromatin. Poly-ADP-ribosylated by PARP2; poly-ADP-ribosylation mediates the recruitment of CHD1L to DNA damage sites. Mono-ADP-ribosylated at Lys-521 by SIRT6 in response to oxidative stress, promoting recruitment to double-strand breaks (DSBs) sites. Phosphorylated at Thr-594 by PRKDC in response to DNA damage following virus infection, promoting its translocation to the cytosol. Phosphorylated by TXK. In terms of processing, S-nitrosylated, leading to inhibit transcription regulation activity. Post-translationally, proteolytically cleaved by caspase-3 (CASP3) and caspase-7 (CASP7) in response to apoptosis to generate the Poly [ADP-ribose] polymerase 1, processed N-terminus and Poly [ADP-ribose] polymerase 1, processed C-terminus forms. CASP3-mediated cleavage is promoted by the TP53/p53-induced long non-coding RNA SPARCLE, which binds PARP1 in response to genotoxic stress. Sumoylated with SUMO1 or SUMO2 by PIAS4 following prolonged residence (trapping) to chromatin. Sumoylation promotes ubiquitination by RNF4 and removal from chromatin by VCP/p97. In terms of processing, ubiquitinated by RNF4 following sumoylation by PIAS4 in response to prolonged residence (trapping) to chromatin. Ubiquitination promotes removal from chromatin by VCP/p97.

It is found in the chromosome. It localises to the nucleus. The protein localises to the nucleolus. Its subcellular location is the cytoplasm. The protein resides in the cytosol. The catalysed reaction is NAD(+) + (ADP-D-ribosyl)n-acceptor = nicotinamide + (ADP-D-ribosyl)n+1-acceptor + H(+).. The enzyme catalyses L-seryl-[protein] + NAD(+) = O-(ADP-D-ribosyl)-L-seryl-[protein] + nicotinamide + H(+). It carries out the reaction L-aspartyl-[protein] + NAD(+) = 4-O-(ADP-D-ribosyl)-L-aspartyl-[protein] + nicotinamide. It catalyses the reaction L-glutamyl-[protein] + NAD(+) = 5-O-(ADP-D-ribosyl)-L-glutamyl-[protein] + nicotinamide. The catalysed reaction is L-tyrosyl-[protein] + NAD(+) = O-(ADP-D-ribosyl)-L-tyrosyl-[protein] + nicotinamide + H(+). The enzyme catalyses L-histidyl-[protein] + NAD(+) = N(tele)-(ADP-D-ribosyl)-L-histidyl-[protein] + nicotinamide + H(+). Its activity is regulated as follows. ADP-ribosyltransferase activity is regulated via an allosteric activation mechanism. In absence of activation signal, PARP1 is autoinhibited by the PARP alpha-helical domain (also named HD region), which prevents effective NAD(+)-binding. Activity is highly stimulated by signals, such as DNA strand breaks. Binding to damaged DNA unfolds the PARP alpha-helical domain, relieving autoinhibition. Poly-ADP-ribosyltransferase activity is tightly regulated and PARP1 is removed from damaged chromatin following initial poly-ADP-ribosylation of chromatin to avoid prolonged residence (trapping) that has cytotoxic consequences. A number of factors (VCP/p97) or post-translational modifications (auto-poly-ADP-ribosylation or ubiquitination) promote PARP1 removal from chromatin. ADP-ribosyltransferase activity is inhibited by a number of PARP inhibitors (PARPi) compounds, that are used the treatment of breast or ovarian cancers that have defects in DNA repair by homologous recombination. PARPi molecules can be classified in three categories: type I compounds (EB-47, UKTT15 and BAD) that promote allosteric retention of PARP1 on DNA, type II inhibitors (talazoparib and olaparib) that mediate a non-allosteric inhibition, and type III inhibitors (rucaparib, niraparib, and veliparib) that promote allosteric release from DNA. Trapping to chromatin by PARPi molecules triggers activation of the cGAS-STING pathway. Poly-ADP-ribosyltransferase that mediates poly-ADP-ribosylation of proteins and plays a key role in DNA repair. Mediates glutamate, aspartate, serine, histidine or tyrosine ADP-ribosylation of proteins: the ADP-D-ribosyl group of NAD(+) is transferred to the acceptor carboxyl group of target residues and further ADP-ribosyl groups are transferred to the 2'-position of the terminal adenosine moiety, building up a polymer with an average chain length of 20-30 units. Serine ADP-ribosylation of proteins constitutes the primary form of ADP-ribosylation of proteins in response to DNA damage. Specificity for the different amino acids is conferred by interacting factors, such as HPF1 and NMNAT1. Following interaction with HPF1, catalyzes serine ADP-ribosylation of target proteins; HPF1 confers serine specificity by completing the PARP1 active site. Also catalyzes tyrosine ADP-ribosylation of target proteins following interaction with HPF1. Following interaction with NMNAT1, catalyzes glutamate and aspartate ADP-ribosylation of target proteins; NMNAT1 confers glutamate and aspartate specificity. PARP1 initiates the repair of DNA breaks: recognizes and binds DNA breaks within chromatin and recruits HPF1, licensing serine ADP-ribosylation of target proteins, such as histones (H2BS6ADPr and H3S10ADPr), thereby promoting decompaction of chromatin and the recruitment of repair factors leading to the reparation of DNA strand breaks. HPF1 initiates serine ADP-ribosylation but restricts the polymerase activity of PARP1 in order to limit the length of poly-ADP-ribose chains. In addition to base excision repair (BER) pathway, also involved in double-strand breaks (DSBs) repair: together with TIMELESS, accumulates at DNA damage sites and promotes homologous recombination repair by mediating poly-ADP-ribosylation. Mediates the poly-ADP-ribosylation of a number of proteins, including itself, APLF, CHFR, RPA1 and NFAT5. In addition to proteins, also able to ADP-ribosylate DNA: catalyzes ADP-ribosylation of DNA strand break termini containing terminal phosphates and a 2'-OH group in single- and double-stranded DNA, respectively. Required for PARP9 and DTX3L recruitment to DNA damage sites. PARP1-dependent PARP9-DTX3L-mediated ubiquitination promotes the rapid and specific recruitment of 53BP1/TP53BP1, UIMC1/RAP80, and BRCA1 to DNA damage sites. PARP1-mediated DNA repair in neurons plays a role in sleep: senses DNA damage in neurons and promotes sleep, facilitating efficient DNA repair. In addition to DNA repair, also involved in other processes, such as transcription regulation, programmed cell death, membrane repair, adipogenesis and innate immunity. Acts as a repressor of transcription: binds to nucleosomes and modulates chromatin structure in a manner similar to histone H1, thereby altering RNA polymerase II. Acts both as a positive and negative regulator of transcription elongation, depending on the context. Acts as a positive regulator of transcription elongation by mediating poly-ADP-ribosylation of NELFE, preventing RNA-binding activity of NELFE and relieving transcription pausing. Acts as a negative regulator of transcription elongation in response to DNA damage by catalyzing poly-ADP-ribosylation of CCNT1, disrupting the phase separation activity of CCNT1 and subsequent activation of CDK9. Involved in replication fork progression following interaction with CARM1: mediates poly-ADP-ribosylation at replication forks, slowing fork progression. Poly-ADP-ribose chains generated by PARP1 also play a role in poly-ADP-ribose-dependent cell death, a process named parthanatos. Also acts as a negative regulator of the cGAS-STING pathway. Acts by mediating poly-ADP-ribosylation of CGAS: PARP1 translocates into the cytosol following phosphorylation by PRKDC and catalyzes poly-ADP-ribosylation and inactivation of CGAS. Acts as a negative regulator of adipogenesis: catalyzes poly-ADP-ribosylation of histone H2B on 'Glu-35' (H2BE35ADPr) following interaction with NMNAT1, inhibiting phosphorylation of H2B at 'Ser-36' (H2BS36ph), thereby blocking expression of pro-adipogenetic genes. Involved in the synthesis of ATP in the nucleus, together with NMNAT1, PARG and NUDT5. Nuclear ATP generation is required for extensive chromatin remodeling events that are energy-consuming. Its function is as follows. Promotes AIFM1-mediated apoptosis. This form, which translocates into the cytoplasm following cleavage by caspase-3 (CASP3) and caspase-7 (CASP7) in response to apoptosis, is auto-poly-ADP-ribosylated and serves as a poly-ADP-ribose carrier to induce AIFM1-mediated apoptosis. Functionally, this cleavage form irreversibly binds to DNA breaks and interferes with DNA repair, promoting DNA damage-induced apoptosis. This is Poly [ADP-ribose] polymerase 1 from Homo sapiens (Human).